Reading from the N-terminus, the 577-residue chain is Aspartate--tRNA(Asp/Asn) ligase (577 aa).

Residue Glu-171 participates in L-aspartate binding. Residues Gln-195–Lys-198 form an aspartate region. Residue Arg-217 participates in L-aspartate binding. ATP is bound by residues Arg-217–Glu-219 and Gln-226. His-444 lines the L-aspartate pocket. Glu-474 contributes to the ATP binding site. Residue Arg-481 participates in L-aspartate binding. Gly-526–Arg-529 is an ATP binding site.

This sequence belongs to the class-II aminoacyl-tRNA synthetase family. Type 1 subfamily. In terms of assembly, homodimer.

It localises to the cytoplasm. It carries out the reaction tRNA(Asx) + L-aspartate + ATP = L-aspartyl-tRNA(Asx) + AMP + diphosphate. In terms of biological role, aspartyl-tRNA synthetase with relaxed tRNA specificity since it is able to aspartylate not only its cognate tRNA(Asp) but also tRNA(Asn). Reaction proceeds in two steps: L-aspartate is first activated by ATP to form Asp-AMP and then transferred to the acceptor end of tRNA(Asp/Asn). The chain is Aspartate--tRNA(Asp/Asn) ligase from Helicobacter pylori (strain G27).